Here is a 224-residue protein sequence, read N- to C-terminus: uncharacterized protein (224 aa).

G177, I197, and L206 together coordinate S-adenosyl-L-methionine.

Belongs to the class IV-like SAM-binding methyltransferase superfamily. RNA methyltransferase TrmH family.

This is an uncharacterized protein from Archaeoglobus fulgidus (strain ATCC 49558 / DSM 4304 / JCM 9628 / NBRC 100126 / VC-16).